We begin with the raw amino-acid sequence, 288 residues long: Diaminopimelate epimerase (288 aa).

Residues Asn14 and Asn67 each contribute to the substrate site. Cys76 acts as the Proton donor in catalysis. Substrate-binding positions include 77–78, Asn166, Asn199, and 217–218; these read GN and ER. The active-site Proton acceptor is the Cys226. 227–228 contacts substrate; sequence GT.

Belongs to the diaminopimelate epimerase family. In terms of assembly, homodimer.

It is found in the cytoplasm. It carries out the reaction (2S,6S)-2,6-diaminopimelate = meso-2,6-diaminopimelate. The protein operates within amino-acid biosynthesis; L-lysine biosynthesis via DAP pathway; DL-2,6-diaminopimelate from LL-2,6-diaminopimelate: step 1/1. Its function is as follows. Catalyzes the stereoinversion of LL-2,6-diaminopimelate (L,L-DAP) to meso-diaminopimelate (meso-DAP), a precursor of L-lysine and an essential component of the bacterial peptidoglycan. The polypeptide is Diaminopimelate epimerase (Bacillus thuringiensis (strain Al Hakam)).